The sequence spans 420 residues: Nucleobindin-2 (420 aa).

Positions 1-24 (MRWRTILLQYCFLLITCLLTALEA) are cleaved as a signal peptide. A DNA-binding region spans residues 171–223 (KTRHEEFKKYEMMKEHERREYLKTLNEEKRKEEESKFEEMKKKHENHPKVNHP). The span at 195-212 (LNEEKRKEEESKFEEMKK) shows a compositional bias: basic and acidic residues. A disordered region spans residues 195–225 (LNEEKRKEEESKFEEMKKKHENHPKVNHPGS). The segment at 213 to 420 (KHENHPKVNH…AGELKFEPHI (208 aa)) is binds to necdin. 2 consecutive EF-hand domains span residues 241-276 (PNDFDPKTFFKLHDVNSDGFLDEQELEALFTKELEK) and 293-328 (ERLRMREHVMNEVDTNKDRLVTLEEFLKATEKKEFL). Residues D254 and N256 each contribute to the Ca(2+) site. Phosphoserine is present on S257. D258, E265, D306, N308, D310, and E317 together coordinate Ca(2+). The short motif at 304-334 (EVDTNKDRLVTLEEFLKATEKKEFLEPDSWE) is the GBA element. S332 carries the post-translational modification Phosphoserine. Residues 398–420 (QKKLQQGIPPSGPAGELKFEPHI) form a disordered region.

It belongs to the nucleobindin family. Interacts (via GBA motif) with guanine nucleotide-binding protein G(i) alpha subunit GNAI3. Preferentially interacts with inactive rather than active GNAI3. Interaction with GNAI3 is inhibited when NUCB2 binds calcium, probably due to a conformational change which renders the GBA motif inaccessible. Binds to the postmitotic growth suppressor NDN; coexpression abolishes NUCB2 secretion. Interacts with MC4R. In terms of tissue distribution, predominantly expressed in spleen, testis and normal stomach.

It is found in the golgi apparatus. Its subcellular location is the membrane. The protein resides in the cytoplasm. It localises to the secreted. The protein localises to the endoplasmic reticulum. It is found in the nucleus envelope. In terms of biological role, calcium-binding protein which may have a role in calcium homeostasis. Acts as a non-receptor guanine nucleotide exchange factor which binds to and activates guanine nucleotide-binding protein (G-protein) alpha subunit GNAI3. Functionally, anorexigenic peptide, seems to play an important role in hypothalamic pathways regulating food intake and energy homeostasis, acting in a leptin-independent manner. May also exert hypertensive roles and modulate blood pressure through directly acting on peripheral arterial resistance. In intestinal epithelial cells, plays a role in the inhibition of hepatic glucose production via MC4R receptor leading to increased cyclic adenosine monophosphate (cAMP) levels and glucagon-like peptide 1 (GLP-1) secretion. This Homo sapiens (Human) protein is Nucleobindin-2.